The following is a 274-amino-acid chain: Protein FRG1 homolog (274 aa).

The Nuclear localization signal signature appears at lysine 20–aspartate 36. A disordered region spans residues glycine 27–valine 46. Residues asparagine 34–proline 43 are compositionally biased toward basic and acidic residues. The Bipartite nuclear localization signal signature appears at glutamine 252–methionine 268.

This sequence belongs to the FRG1 family.

Its subcellular location is the nucleus. The protein resides in the cajal body. It is found in the nucleolus. It localises to the cytoplasm. Its function is as follows. Binds to mRNA in a sequence-independent manner. May play a role in regulation of pre-mRNA splicing or in the assembly of rRNA into ribosomal subunits. May be involved in mRNA transport. May be involved in epigenetic regulation of muscle differentiation through regulation of activity of the histone-lysine N-methyltransferase KMT5B. The polypeptide is Protein FRG1 homolog (frg-1) (Caenorhabditis elegans).